We begin with the raw amino-acid sequence, 130 residues long: Small ribosomal subunit protein uS8 (130 aa).

Belongs to the universal ribosomal protein uS8 family. Part of the 30S ribosomal subunit.

In terms of biological role, one of the primary rRNA binding proteins, it binds directly to 16S rRNA central domain where it helps coordinate assembly of the platform of the 30S subunit. The sequence is that of Small ribosomal subunit protein uS8 from Thermococcus sibiricus (strain DSM 12597 / MM 739).